Consider the following 467-residue polypeptide: Ammonium transporter Rh type C (467 aa).

The Cytoplasmic segment spans residues 1–9 (MAWNTNLRW). Residues 10–30 (RLPLLCLVLEVAMVVLFGLFV) form a helical membrane-spanning segment. Residues 31 to 61 (RYSPDADSSWSNEKRKGNITSDLENEFYYRY) are Extracellular-facing. Asn48 carries N-linked (GlcNAc...) asparagine glycosylation. A helical membrane pass occupies residues 62-82 (PSFQDVHVMVFLGFGFLMTFL). At 83-86 (QRYG) the chain is on the cytoplasmic side. The helical transmembrane segment at 87–107 (YCALGFNFLLAALGVQWALLM) threads the bilayer. The Extracellular segment spans residues 108–131 (QGWFQYTKDRLILLGIKNLIDADS). 2 helical membrane-spanning segments follow: residues 132-152 (CVASVCVAFGAVLGKVSPVQM) and 153-173 (LLMTFFQVALFSANEFLLLHV). Residues 174–179 (LEVKDA) lie on the Extracellular side of the membrane. Residues 180–200 (GGSITIHIFGAYFGLTVTWIL) traverse the membrane as a helical segment. At 201–219 (YRHNLDHSRERQSSVYHSN) the chain is on the cytoplasmic side. A helical membrane pass occupies residues 220-240 (LFAMIGTLFLWIYWPSFNSAM). Over 241–251 (SNYGDAQHRAA) the chain is Extracellular. The helical transmembrane segment at 252–272 (INTYCSLAASVLTSVAMSSVL) threads the bilayer. Topologically, residues 273–282 (HKKGKLDMVH) are cytoplasmic. A helical membrane pass occupies residues 283–303 (IQNATLAGGVGVGTAAEMMLM). Pro304 is a topological domain (extracellular). A helical transmembrane segment spans residues 305-325 (YGALIVGFICGAVSTLGFVYL). Topologically, residues 326–343 (TPFLESRLRIQDTCGIHN) are cytoplasmic. The chain crosses the membrane as a helical span at residues 344–364 (LHGIPGLIGAIVGAVTAAYAS). The Extracellular portion of the chain corresponds to 365 to 391 (PDGDRGFVYPFGFHNEKDEKVQGRFQA). Residues 392-412 (FGLLLTLAIAMVGGTIMGLIL) form a helical membrane-spanning segment. At 413-467 (KLPFWGQAMDEDCFDDSIYWEMHEEKSSSPEDHTHKPSVPTEPVEQPTSSATLAP) the chain is on the cytoplasmic side. Positions 436–447 (EEKSSSPEDHTH) are enriched in basic and acidic residues. Positions 436–467 (EEKSSSPEDHTHKPSVPTEPVEQPTSSATLAP) are disordered. Polar residues predominate over residues 458–467 (QPTSSATLAP).

Belongs to the ammonium transporter (TC 2.A.49) family. Rh subfamily. In terms of assembly, homotrimer. In terms of processing, N-glycosylated.

It is found in the cell membrane. It localises to the apical cell membrane. It catalyses the reaction NH4(+)(in) = NH4(+)(out). The catalysed reaction is methylamine(out) = methylamine(in). The enzyme catalyses CO2(out) = CO2(in). Ammonium transporter involved in the maintenance of acid-base homeostasis. Transports ammonium and its related derivative methylammonium across the plasma membrane of epithelial cells likely contributing to renal transepithelial ammonia transport and ammonia metabolism. Postulated to primarily mediate an electroneutral bidirectional transport of NH3 ammonia species according to a mechanism that implies interaction of an NH4(+) ion with acidic residues of the pore entry followed by dissociation of NH4(+) into NH3 and H(+). As a result NH3 transits through the central pore and is protonated on the extracellular side reforming NH4(+). May act as a CO2 channel providing for renal acid secretion. The protein is Ammonium transporter Rh type C (RHCG) of Oryctolagus cuniculus (Rabbit).